The sequence spans 149 residues: Calmodulin (149 aa).

Residue threonine 2 is modified to N-acetylthreonine. 4 consecutive EF-hand domains span residues 8-43, 44-79, 81-116, and 117-149; these read EQIA…LGQN, PTEA…KMKE, DSEE…LGEK, and LTDE…MTSK. Ca(2+) contacts are provided by aspartate 21, aspartate 23, aspartate 25, threonine 27, glutamate 32, aspartate 57, aspartate 59, asparagine 61, threonine 63, glutamate 68, aspartate 94, aspartate 96, asparagine 98, and glutamate 105. Lysine 116 is modified (N6,N6,N6-trimethyllysine). The Ca(2+) site is built by aspartate 130, aspartate 132, aspartate 134, glutamine 136, and glutamate 141.

Belongs to the calmodulin family.

Calmodulin mediates the control of a large number of enzymes, ion channels and other proteins by Ca(2+). Among the enzymes to be stimulated by the calmodulin-Ca(2+) complex are a number of protein kinases and phosphatases. This chain is Calmodulin, found in Halichondria okadai (Marine sponge).